A 648-amino-acid chain; its full sequence is SRSF protein kinase 1 (648 aa).

The segment at 1–57 (MERKVLALQARKKRTKAKKDKAQRKPETQHRGSAPHSESDIPEQEEEILGSDDDEQE) is disordered. The span at 10–22 (ARKKRTKAKKDKA) shows a compositional bias: basic residues. Over residues 40–57 (DIPEQEEEILGSDDDEQE) the composition is skewed to acidic residues. Ser-51 bears the Phosphoserine mark. The Protein kinase domain occupies 80 to 646 (YHVIRKLGWG…AAECLRHPWL (567 aa)). Residues 86 to 94 (LGWGHFSTV) and Lys-109 each bind ATP. Asp-213 acts as the Proton acceptor in catalysis. Disordered regions lie at residues 238 to 354 (WQRS…APEI) and 395 to 464 (PSFL…DSKG). A compositionally biased stretch (basic residues) spans 265 to 276 (KNKKKKLKKKQK). 2 stretches are compositionally biased toward basic and acidic residues: residues 277–288 (RQAELLEKRMQE) and 304–317 (NKQE…DRPL). Phosphoserine occurs at positions 309, 311, and 333. Composition is skewed to polar residues over residues 333-343 (SNSIGQDQTLT) and 396-441 (SFLN…TQLE). Thr-448 carries the post-translational modification Phosphothreonine. Residue Ser-450 is modified to Phosphoserine. Ser-548 is subject to Phosphoserine; by CK2.

It belongs to the protein kinase superfamily. CMGC Ser/Thr protein kinase family. Monomer. Found in a multisubunit complex containing seven proteins, named toposome, which separates entangled circular chromatin DNA during chromosome segregation. Interacts with HHV-1 ICP27 protein. Interacts with DNAJC8 and AHSA1/AHA1 and this mediates formation of a complex with the Hsp70 /Hsp90 machinery. Binds to IGF2BP1, SYNCRIP, HNRNPA2B1 and HNRNPC. Interacts with SAFB/SAFB1 and SAFB2 which inhibits its activity. Mg(2+) is required as a cofactor. In terms of tissue distribution, predominantly expressed in the testis but is also present at lower levels in heart, spleen, liver, brain, kidney, lung and skeletal muscle. Present in all germinal cells in the seminiferous tubules but not in mature spermatozoa.

Its subcellular location is the cytoplasm. The protein localises to the nucleus. It is found in the nucleoplasm. It localises to the nucleus matrix. The protein resides in the microsome. Its subcellular location is the nucleus speckle. The protein localises to the chromosome. It catalyses the reaction L-seryl-[protein] + ATP = O-phospho-L-seryl-[protein] + ADP + H(+). The catalysed reaction is L-threonyl-[protein] + ATP = O-phospho-L-threonyl-[protein] + ADP + H(+). Its activity is regulated as follows. Activated by phosphorylation on Ser-51 and Ser-548. Serine/arginine-rich protein-specific kinase which specifically phosphorylates its substrates at serine residues located in regions rich in arginine/serine dipeptides, known as RS domains and is involved in the phosphorylation of SR splicing factors and the regulation of splicing. Plays a central role in the regulatory network for splicing, controlling the intranuclear distribution of splicing factors in interphase cells and the reorganization of nuclear speckles during mitosis. Can influence additional steps of mRNA maturation, as well as other cellular activities, such as chromatin reorganization in somatic and sperm cells and cell cycle progression. Phosphorylates SFRS2, ZRSR2, LBR and PRM1. Phosphorylates SRSF1 using a directional (C-terminal to N-terminal) and a dual-track mechanism incorporating both processive phosphorylation (in which the kinase stays attached to the substrate after each round of phosphorylation) and distributive phosphorylation steps (in which the kinase and substrate dissociate after each phosphorylation event). The RS domain of SRSF1 binds first to a docking groove in the large lobe of the kinase domain of SRPK1. This induces certain structural changes in SRPK1 and/or RRM2 domain of SRSF1, allowing RRM2 to bind the kinase and initiate phosphorylation. The cycles continue for several phosphorylation steps in a processive manner (steps 1-8) until the last few phosphorylation steps (approximately steps 9-12). During that time, a mechanical stress induces the unfolding of the beta-4 motif in RRM2, which then docks at the docking groove of SRPK1. This also signals RRM2 to begin to dissociate, which facilitates SRSF1 dissociation after phosphorylation is completed. Can mediate hepatitis B virus (HBV) core protein phosphorylation. It plays a negative role in the regulation of HBV replication through a mechanism not involving the phosphorylation of the core protein but by reducing the packaging efficiency of the pregenomic RNA (pgRNA) without affecting the formation of the viral core particles. Can induce splicing of exon 10 in MAPT/TAU. This chain is SRSF protein kinase 1, found in Mus musculus (Mouse).